Consider the following 362-residue polypeptide: Peptide chain release factor 1 (362 aa).

Q236 carries the N5-methylglutamine modification.

This sequence belongs to the prokaryotic/mitochondrial release factor family. Post-translationally, methylated by PrmC. Methylation increases the termination efficiency of RF1.

Its subcellular location is the cytoplasm. Functionally, peptide chain release factor 1 directs the termination of translation in response to the peptide chain termination codons UAG and UAA. The chain is Peptide chain release factor 1 from Lactobacillus johnsonii (strain CNCM I-12250 / La1 / NCC 533).